A 24-amino-acid chain; its full sequence is Coenzyme PQQ synthesis protein A (24 aa).

Positions 16–20 (EITMY) form a cross-link, pyrroloquinoline quinone (Glu-Tyr).

This sequence belongs to the PqqA family.

The protein operates within cofactor biosynthesis; pyrroloquinoline quinone biosynthesis. Functionally, required for coenzyme pyrroloquinoline quinone (PQQ) biosynthesis. PQQ is probably formed by cross-linking a specific glutamate to a specific tyrosine residue and excising these residues from the peptide. The polypeptide is Coenzyme PQQ synthesis protein A (Burkholderia cenocepacia (strain ATCC BAA-245 / DSM 16553 / LMG 16656 / NCTC 13227 / J2315 / CF5610) (Burkholderia cepacia (strain J2315))).